The following is a 555-amino-acid chain: Hydrogenase-4 component G (555 aa).

The protein belongs to the complex I 49 kDa subunit family. [4Fe-4S] cluster is required as a cofactor.

In terms of biological role, possible component of hydrogenase 4. The protein is Hydrogenase-4 component G of Escherichia coli (strain K12).